Reading from the N-terminus, the 680-residue chain is PAN2-PAN3 deadenylation complex subunit PAN3 (680 aa).

Disordered stretches follow at residues 1-26 (MATTRYNSNDFRRQLGSPRPKGRADT), 51-87 (HDQTKKSPKPDATTRKTLNVDSAPFTPAVSSQPSKKT), and 99-120 (FTPRATAATPTGTPTAQETDIP). The segment at 25–54 (DTKDTLCRNILIYGHCRYEDAGCAFNHDQT) adopts a C3H1-type zinc-finger fold. Residues 52–64 (DQTKKSPKPDATT) show a composition bias toward basic and acidic residues. Residues 62–82 (ATTRKTLNVDSAPFTPAVSSQ) carry the PABPC-interacting motif-2 (PAM-2) motif. A compositionally biased stretch (low complexity) spans 99 to 117 (FTPRATAATPTGTPTAQET). Residues 256-522 (QTMTGTAALQ…TVKNLVAGIN (267 aa)) are pseudokinase domain. ATP is bound by residues arginine 311, 360–367 (EYYPLAET), and 422–423 (TK). Positions 523-561 (EHVMTAFDAQQRQSDMLYSELYREVENGRVLRLLMKLAT) form a coiled coil. Residues 562–680 (INERTEYDKD…VHHPSHRDRF (119 aa)) are knob domain. Over residues 655–669 (SGNGRGGPVASGSGH) the composition is skewed to gly residues. Residues 655–680 (SGNGRGGPVASGSGHGVHHPSHRDRF) form a disordered region. A compositionally biased stretch (basic residues) spans 670 to 680 (GVHHPSHRDRF).

This sequence belongs to the protein kinase superfamily. PAN3 family. As to quaternary structure, homodimer. Forms a heterotrimer with a catalytic subunit PAN2 to form the poly(A)-nuclease (PAN) deadenylation complex. Interacts (via PAM-2 motif) with poly(A)-binding protein PAB1 (via PABC domain), conferring substrate specificity of the enzyme complex.

It is found in the cytoplasm. Regulatory subunit of the poly(A)-nuclease (PAN) deadenylation complex, one of two cytoplasmic mRNA deadenylases involved in mRNA turnover. PAN specifically shortens poly(A) tails of RNA and the activity is stimulated by poly(A)-binding protein PAB1. PAN deadenylation is followed by rapid degradation of the shortened mRNA tails by the CCR4-NOT complex. Deadenylated mRNAs are then degraded by two alternative mechanisms, namely exosome-mediated 3'-5' exonucleolytic degradation, or deadenylation-dependent mRNA decaping and subsequent 5'-3' exonucleolytic degradation by XRN1. May also be involved in post-transcriptional maturation of mRNA poly(A) tails. PAN3 acts as a positive regulator for PAN activity, recruiting the catalytic subunit PAN2 to mRNA via its interaction with RNA and with PAB1. This Pyricularia oryzae (strain 70-15 / ATCC MYA-4617 / FGSC 8958) (Rice blast fungus) protein is PAN2-PAN3 deadenylation complex subunit PAN3.